The primary structure comprises 150 residues: Histone H3-like centromeric protein A (150 aa).

The segment at 1–55 (MRPGSTPPSRRKSRPPRRVSPPLPTTSRTSPRRPHAQQQRRASRASPKKRFRPGT) is disordered. Over residues 41–53 (RASRASPKKRFRP) the composition is skewed to basic residues. The H3-like stretch occupies residues 53–150 (PGTRALMEIR…RIRGVNEGLG (98 aa)).

Belongs to the histone H3 family. As to quaternary structure, component of centromeric nucleosomes, where DNA is wrapped around a histone octamer core. The octamer contains two molecules each of H2A, H2B, CENPA and H4 assembled in one CENPA-H4 heterotetramer and two H2A-H2B heterodimers. CENPA modulates the DNA-binding characteristics of nucleosomes so that protruding DNA ends have higher flexibility than in nucleosomes containing conventional histone H3.

The protein localises to the nucleus. The protein resides in the chromosome. Its subcellular location is the centromere. Its function is as follows. Histone H3-like nucleosomal protein that is specifically found in centromeric nucleosomes. Replaces conventional H3 in the nucleosome core of centromeric chromatin that serves as an assembly site for the inner kinetochore. The presence of CENPA subtly modifies the nucleosome structure and the way DNA is wrapped around the nucleosome and gives rise to protruding DNA ends that are less well-ordered and rigid compared to nucleosomes containing histone H3. May serve as an epigenetic mark that propagates centromere identity through replication and cell division. Required for recruitment and assembly of kinetochore proteins, and as a consequence required for progress through mitosis, chromosome segregation and cytokinesis. The sequence is that of Histone H3-like centromeric protein A (cenpa) from Xenopus laevis (African clawed frog).